The chain runs to 1755 residues: MLSATPLYGNVHSWMNSERVRMCGASEDRKILVNDGDASKARLELREENPLNHNVVDASTAHRIDGLAALSMDRTGLIREGLRVPGNIVYSSLCGLGSEKGREAATSTLGGLGFSSERNPEMQFKPNTPETVEASAVSGKPPNGFSAIYKTPPGIQKSAVATAEALGLDRPASDKQSPLNINGASYLRLPWVNPYMEGATPAIYPFLDSPNKYSLNMYKALLPQQSYSLAQPLYSPVCTNGERFLYLPPPHYVGPHIPSSLASPMRLSTPSASPAIPPLVHCADKSLPWKMGVSPGNPVDSHAYPHIQNSKQPRVPSAKAVTSGLPGDTALLLPPSPRPSPRVHLPTQPAADTYSEFHKHYARISTSPSVALSKPYMTVSSEFPAARLSNGKYPKAPEGGEGAQPVPGHARKTAVQDRKDGSSPPLLEKQTVTKDVTDKPLDLSSKVVDVDASKADHMKKMAPTVLVHSRAGSGLVLSGSEIPKETLSPPGNGCAIYRSEIISTAPSSWVVPGPSPNEENNGKSMSLKNKALDWAIPQQRSSSCPRMGGTDAVITNVSGSVSSAGRPASASPAPNANADGTKTSRSSVETTPSVIQHVGQPPATPAKHSSSTSSKGAKASNPEPSFKANENGLPPSSIFLSPNEAFRSPPIPYPRSYLPYPAPEGIAVSPLSLHGKGPVYPHPVLLPNGSLFPGHLAPKPGLPYGLPTGRPEFVTYQDALGLGMVHPMLIPHTPIEITKEEKPERRSRSHERARYEDPTLRNRFSEILETSSTKLHPDVPTDKNLKPNPNWNQGKTVVKSDKLVYVDLLREEPDAKTDTNVSKPSFAAESVGQSAEPPKPSVEPALQQHRDFIALREELGRISDFHETYTFKQPVFTVSKDSVLAGTNKENLGLPVSTPFLEPPLGSDGPAVTFGKTQEDPKPFCVGSAPPSVDVTPTYTKDGADEAESNDGKVLKPKPSKLAKRIANSAGYVGDRFKCVTTELYADSSQLSREQRALQMEGLQEDSILCLPAAYCERAMMRFSELEMKEREGGHPATKDSEMCKFSPADWERLKGNQDKKPKSVTLEEAIAEQNESERCEYSVGNKHRDPFEAPEDKDLPVEKYFVERQPVSEPPADQVASDMPHSPTLRVDRKRKVSGDSSHTETTAEEVPEDPLLKAKRRRVSKDDWPEREMTNSSSNHLEDPHYSELTNLKVCIELTGLHPKKQRHLLHLRERWEQQVSAADGKPGRQSRKEVTQATQPEAIPQGTNITEEKPGRKRAEAKGNRSWSEESLKPSDNEQGLPVFSGSPPMKSLSSTSAGGKKQAQPSCAPASRPPAKQQKIKENQKTDVLCADEEEDCQAASLLQKYTDNSEKPSGKRLCKTKHLIPQESRRGLPLTGEYYVENADGKVTVRRFRKRPEPSSDYDLSPAKQEPKPFDRLQQLLPASQSTQLPCSSSPQETTQSRPMPPEARRLIVNKNAGETLLQRAARLGYEEVVLYCLENKICDVNHRDNAGYCALHEACARGWLNIVRHLLEYGADVNCSAQDGTRPLHDAVENDHLEIVRLLLSYGADPTLATYSGRTIMKMTHSELMEKFLTDYLNDLQGRNDDDASGTWDFYGSSVCEPDDESGYDVLANPPGPEDQDDDDDAYSDVFEFEFSETPLLPCYNIQVSVAQGPRNWLLLSDVLKKLKMSSRIFRCNFPNVEIVTIAEAEFYRQVSASLLFSCSKDLEAFNPESKELLDLVEFTNEIQTLLGSSVEWLHPSDLASDNYW.

The segment at 309-345 (NSKQPRVPSAKAVTSGLPGDTALLLPPSPRPSPRVHL) is disordered. Phosphoserine is present on residues S336, S340, S365, and S367. The tract at residues 388–438 (LSNGKYPKAPEGGEGAQPVPGHARKTAVQDRKDGSSPPLLEKQTVTKDVTD) is disordered. K392 bears the N6-acetyllysine mark. S423 is subject to Phosphoserine. The tract at residues 498–514 (RSEIISTAPSSWVVPGP) is interaction with BCL6. Residues 557 to 578 (VSGSVSSAGRPASASPAPNANA) are compositionally biased toward low complexity. Disordered regions lie at residues 557 to 641 (VSGS…IFLS), 737 to 760 (ITKE…DPTL), 773 to 794 (TKLH…WNQG), and 815 to 844 (AKTD…SVEP). A compositionally biased stretch (polar residues) spans 580–594 (GTKTSRSSVETTPSV). The span at 605–620 (PAKHSSSTSSKGAKAS) shows a compositional bias: low complexity. The span at 775-785 (LHPDVPTDKNL) shows a compositional bias: basic and acidic residues. K786 is covalently cross-linked (Glycyl lysine isopeptide (Lys-Gly) (interchain with G-Cter in SUMO2)). Residue K872 forms a Glycyl lysine isopeptide (Lys-Gly) (interchain with G-Cter in SUMO2) linkage. Disordered regions lie at residues 1071-1187 (IAEQ…EDPH) and 1220-1328 (QQVS…KENQ). The segment covering 1076–1107 (ESERCEYSVGNKHRDPFEAPEDKDLPVEKYFV) has biased composition (basic and acidic residues). Phosphoserine is present on residues S1127 and S1139. Basic and acidic residues predominate over residues 1166 to 1175 (SKDDWPEREM). Positions 1238-1252 (TQATQPEAIPQGTNI) are enriched in polar residues. Positions 1253-1279 (TEEKPGRKRAEAKGNRSWSEESLKPSD) are enriched in basic and acidic residues. K1256 participates in a covalent cross-link: Glycyl lysine isopeptide (Lys-Gly) (interchain with G-Cter in SUMO2). S1290, S1345, and S1410 each carry phosphoserine. Residue K1413 forms a Glycyl lysine isopeptide (Lys-Gly) (interchain with G-Cter in SUMO2) linkage. Polar residues predominate over residues 1430–1447 (QSTQLPCSSSPQETTQSR). A disordered region spans residues 1430–1451 (QSTQLPCSSSPQETTQSRPMPP). 3 ANK repeats span residues 1462–1495 (AGET…HRDN), 1496–1525 (AGYC…DVNC), and 1529–1558 (DGTR…DPTL). Positions 1634-1748 (SDVFEFEFSE…SSVEWLHPSD (115 aa)) are necessary and sufficient for interaction with PCGF1.

It belongs to the BCOR family. In terms of assembly, interacts with BCL6; the interaction is direct. Forms ternary complexes with BCL6 and SMRT/NCOR2 on selected target genes promoters; potently repress expression. Can interact with HDAC1, HDAC3 and HDAC5. Interacts with PCGF1; the interaction is direct. Interacts with KDM2B. Component of an approximately 800 kDa repressive BCOR complex at least composed of BCOR, RYBP, PCGF1, RING1, RNF2/RING2, KDM2B and SKP1. Interacts with CPNE4 (via VWFA domain). Isoform 1 may interact with MLLT3/AF9. In terms of tissue distribution, ubiquitously expressed.

The protein localises to the nucleus. Its function is as follows. Transcriptional corepressor. May specifically inhibit gene expression when recruited to promoter regions by sequence-specific DNA-binding proteins such as BCL6 and MLLT3. This repression may be mediated at least in part by histone deacetylase activities which can associate with this corepressor. Involved in the repression of TFAP2A; impairs binding of BCL6 and KDM2B to TFAP2A promoter regions. Via repression of TFAP2A acts as a negative regulator of osteo-dentiogenic capacity in adult stem cells; the function implies inhibition of methylation on histone H3 'Lys-4' (H3K4me3) and 'Lys-36' (H3K36me2). This Homo sapiens (Human) protein is BCL-6 corepressor (BCOR).